Consider the following 274-residue polypeptide: ATP synthase subunit a (274 aa).

Transmembrane regions (helical) follow at residues 43–63 (TLNIDSLFFSVVLGLAFLLVF), 103–123 (VIAPLALTVFVWVLLMNMMDL), 149–169 (DVSITLSMALGVFILIIFYSI), 223–243 (LIFILIAGLLPWWSQWMLSVP), and 245–265 (AIFHILIITLQAFIFMVLTIV).

Belongs to the ATPase A chain family. In terms of assembly, F-type ATPases have 2 components, CF(1) - the catalytic core - and CF(0) - the membrane proton channel. CF(1) has five subunits: alpha(3), beta(3), gamma(1), delta(1), epsilon(1). CF(0) has three main subunits: a(1), b(2) and c(9-12). The alpha and beta chains form an alternating ring which encloses part of the gamma chain. CF(1) is attached to CF(0) by a central stalk formed by the gamma and epsilon chains, while a peripheral stalk is formed by the delta and b chains.

It localises to the cell inner membrane. Functionally, key component of the proton channel; it plays a direct role in the translocation of protons across the membrane. The chain is ATP synthase subunit a from Yersinia pestis bv. Antiqua (strain Angola).